A 1333-amino-acid chain; its full sequence is Xanthine dehydrogenase/oxidase (1333 aa).

The 2Fe-2S ferredoxin-type domain occupies 4 to 91; that stretch reads DKLVFFVNGR…HVAVTTVEGI (88 aa). [2Fe-2S] cluster contacts are provided by cysteine 43, cysteine 48, cysteine 51, cysteine 73, cysteine 113, cysteine 116, cysteine 148, and cysteine 150. An FAD-binding PCMH-type domain is found at 229-414; it reads FEGERVTWIQ…LSIEIPYSRE (186 aa). FAD is bound by residues 257-264, phenylalanine 337, 347-351, aspartate 360, leucine 404, and lysine 422; these read LVVGNTEI and SVGGN. 2 cysteine pairs are disulfide-bonded: cysteine 509–cysteine 1318 and cysteine 536–cysteine 993. Residues glutamine 768 and phenylalanine 799 each contribute to the Mo-molybdopterin site. Residues glutamate 803 and arginine 881 each coordinate substrate. Arginine 913 contacts Mo-molybdopterin. Residues phenylalanine 915 and threonine 1011 each coordinate substrate. Alanine 1080 is a Mo-molybdopterin binding site. The active-site Proton acceptor is glutamate 1262.

This sequence belongs to the xanthine dehydrogenase family. Homodimer. Interacts with BTN1A1. Requires [2Fe-2S] cluster as cofactor. FAD is required as a cofactor. The cofactor is Mo-molybdopterin. Post-translationally, subject to partial proteolysis; this alters the enzyme from the dehydrogenase form (D) to the oxidase form (O). In terms of processing, contains sulfhydryl groups that are easily oxidized (in vitro); this alters the enzyme from the dehydrogenase form (D) to the oxidase form (O). As to expression, detected in milk (at protein level).

Its subcellular location is the cytoplasm. It localises to the peroxisome. It is found in the secreted. It carries out the reaction xanthine + NAD(+) + H2O = urate + NADH + H(+). The catalysed reaction is hypoxanthine + NAD(+) + H2O = xanthine + NADH + H(+). The enzyme catalyses xanthine + O2 + H2O = urate + H2O2. Can be converted from the dehydrogenase form (D) to the oxidase form (O) irreversibly by proteolysis or reversibly through the oxidation of sulfhydryl groups. Its function is as follows. Key enzyme in purine degradation. Catalyzes the oxidation of hypoxanthine to xanthine. Catalyzes the oxidation of xanthine to uric acid. Contributes to the generation of reactive oxygen species. Has also low oxidase activity towards aldehydes (in vitro). The sequence is that of Xanthine dehydrogenase/oxidase (XDH) from Homo sapiens (Human).